The chain runs to 286 residues: Phosphatidylglycerol--prolipoprotein diacylglyceryl transferase (286 aa).

7 helical membrane passes run 24–44, 72–92, 104–124, 140–160, 190–210, 218–238, and 253–273; these read IGPL…LFAW, FIVW…VLFY, IFAV…VILA, FDVV…ANFI, LYEA…LTHS, RFVG…VEFF, and WLTM…WAMA. Residue arginine 155 coordinates a 1,2-diacyl-sn-glycero-3-phospho-(1'-sn-glycerol).

Belongs to the Lgt family.

The protein localises to the cell inner membrane. It carries out the reaction L-cysteinyl-[prolipoprotein] + a 1,2-diacyl-sn-glycero-3-phospho-(1'-sn-glycerol) = an S-1,2-diacyl-sn-glyceryl-L-cysteinyl-[prolipoprotein] + sn-glycerol 1-phosphate + H(+). The protein operates within protein modification; lipoprotein biosynthesis (diacylglyceryl transfer). Its function is as follows. Catalyzes the transfer of the diacylglyceryl group from phosphatidylglycerol to the sulfhydryl group of the N-terminal cysteine of a prolipoprotein, the first step in the formation of mature lipoproteins. This Mesorhizobium japonicum (strain LMG 29417 / CECT 9101 / MAFF 303099) (Mesorhizobium loti (strain MAFF 303099)) protein is Phosphatidylglycerol--prolipoprotein diacylglyceryl transferase.